We begin with the raw amino-acid sequence, 451 residues long: Bifunctional protein GlmU (451 aa).

Positions 1-229 are pyrophosphorylase; that stretch reads MQRHAIILAA…FDEIIGVNDR (229 aa). UDP-N-acetyl-alpha-D-glucosamine-binding positions include 8–11, Lys-22, Gln-72, and 77–78; these read LAAG and GT. Asp-102 serves as a coordination point for Mg(2+). Residues Gly-139, Glu-154, and Asn-227 each contribute to the UDP-N-acetyl-alpha-D-glucosamine site. Residue Asn-227 coordinates Mg(2+). The interval 230–250 is linker; that stretch reads LMLSEAEKALQQRINRYHMEN. The tract at residues 251–451 is N-acetyltransferase; that stretch reads GVTIIDPSST…QVNKEGYLKK (201 aa). 2 residues coordinate UDP-N-acetyl-alpha-D-glucosamine: Arg-332 and Lys-350. His-362 acts as the Proton acceptor in catalysis. UDP-N-acetyl-alpha-D-glucosamine-binding residues include Tyr-365 and Asn-376. Acetyl-CoA-binding positions include 385–386, Ala-422, and Arg-439; that span reads NY.

It in the N-terminal section; belongs to the N-acetylglucosamine-1-phosphate uridyltransferase family. The protein in the C-terminal section; belongs to the transferase hexapeptide repeat family. As to quaternary structure, homotrimer. It depends on Mg(2+) as a cofactor.

The protein resides in the cytoplasm. The catalysed reaction is alpha-D-glucosamine 1-phosphate + acetyl-CoA = N-acetyl-alpha-D-glucosamine 1-phosphate + CoA + H(+). It carries out the reaction N-acetyl-alpha-D-glucosamine 1-phosphate + UTP + H(+) = UDP-N-acetyl-alpha-D-glucosamine + diphosphate. The protein operates within nucleotide-sugar biosynthesis; UDP-N-acetyl-alpha-D-glucosamine biosynthesis; N-acetyl-alpha-D-glucosamine 1-phosphate from alpha-D-glucosamine 6-phosphate (route II): step 2/2. It functions in the pathway nucleotide-sugar biosynthesis; UDP-N-acetyl-alpha-D-glucosamine biosynthesis; UDP-N-acetyl-alpha-D-glucosamine from N-acetyl-alpha-D-glucosamine 1-phosphate: step 1/1. Its pathway is bacterial outer membrane biogenesis; LPS lipid A biosynthesis. Catalyzes the last two sequential reactions in the de novo biosynthetic pathway for UDP-N-acetylglucosamine (UDP-GlcNAc). The C-terminal domain catalyzes the transfer of acetyl group from acetyl coenzyme A to glucosamine-1-phosphate (GlcN-1-P) to produce N-acetylglucosamine-1-phosphate (GlcNAc-1-P), which is converted into UDP-GlcNAc by the transfer of uridine 5-monophosphate (from uridine 5-triphosphate), a reaction catalyzed by the N-terminal domain. The sequence is that of Bifunctional protein GlmU from Staphylococcus epidermidis (strain ATCC 35984 / DSM 28319 / BCRC 17069 / CCUG 31568 / BM 3577 / RP62A).